Here is a 687-residue protein sequence, read N- to C-terminus: DnaJ protein ERDJ2A (687 aa).

Topologically, residues 1–8 (MAASEENS) are lumenal. A helical membrane pass occupies residues 9–29 (ALFPIFILTIMAIPLVPYTMV). Residues 30–65 (KLSGALSKKQRTIHCQCLECDRSGKYKRSLFKKISN) lie on the Cytoplasmic side of the membrane. Residues 66–86 (FSTWSNLTLVLLWVVMIFLIY) traverse the membrane as a helical segment. Residues 87-190 (YTKNMSREAQ…FLLDIDGASG (104 aa)) lie on the Lumenal side of the membrane. Asn90 carries N-linked (GlcNAc...) asparagine glycosylation. Residues 99–164 (DPFSILGLEP…VSRENFEKYG (66 aa)) form the J domain. Residues 191–211 (GILLLWIVGVCILLPLVIAVI) traverse the membrane as a helical segment. The SEC63 domain maps to 205-603 (PLVIAVIYLS…IGCDKKQALK (399 aa)). The Cytoplasmic segment spans residues 212 to 687 (YLSRSSKYTG…SSEESGSEEE (476 aa)). Residues 619–687 (SDEGAIAEEG…SSEESGSEEE (69 aa)) form a disordered region. The span at 623–654 (AIAEEGMEEEDEIEEEDYDDDYESEYSEDEDE) shows a compositional bias: acidic residues.

Interacts with OEP61/TPR7. In terms of tissue distribution, expressed in leaves, flower buds and flowers.

It is found in the endoplasmic reticulum membrane. In terms of biological role, required for integral membrane and secreted preprotein translocation across the endoplasmic reticulum membrane. The polypeptide is DnaJ protein ERDJ2A (ERDJ2A) (Arabidopsis thaliana (Mouse-ear cress)).